The chain runs to 79 residues: Suppressor of tumorigenicity 20 protein (79 aa).

As to expression, expressed in leukocytes, lung, spleen, liver, heart, kidney, muscle and uterine cervix. Down-regulated in cervical cancer.

In terms of biological role, may act as a tumor suppressor. Promotes apoptosis of cancer cells. The protein is Suppressor of tumorigenicity 20 protein (ST20) of Homo sapiens (Human).